The primary structure comprises 436 residues: Methylenetetrahydrofolate--tRNA-(uracil-5-)-methyltransferase TrmFO (436 aa).

7-12 (GAGLAG) contacts FAD.

It belongs to the MnmG family. TrmFO subfamily. Requires FAD as cofactor.

It localises to the cytoplasm. The enzyme catalyses uridine(54) in tRNA + (6R)-5,10-methylene-5,6,7,8-tetrahydrofolate + NADH + H(+) = 5-methyluridine(54) in tRNA + (6S)-5,6,7,8-tetrahydrofolate + NAD(+). The catalysed reaction is uridine(54) in tRNA + (6R)-5,10-methylene-5,6,7,8-tetrahydrofolate + NADPH + H(+) = 5-methyluridine(54) in tRNA + (6S)-5,6,7,8-tetrahydrofolate + NADP(+). Its function is as follows. Catalyzes the folate-dependent formation of 5-methyl-uridine at position 54 (M-5-U54) in all tRNAs. This Caldicellulosiruptor bescii (strain ATCC BAA-1888 / DSM 6725 / KCTC 15123 / Z-1320) (Anaerocellum thermophilum) protein is Methylenetetrahydrofolate--tRNA-(uracil-5-)-methyltransferase TrmFO.